A 308-amino-acid chain; its full sequence is Protein translocase subunit SecF (308 aa).

A run of 6 helical transmembrane segments spans residues 28-48 (SIILSLISFIWIGIYKFNFGI), 140-160 (IEAGAMAMLFSFLAIMVYIWV), 164-184 (WYFGFGILIALVHDVILALGF), 194-214 (LSTIAAVLTIIGYSVNDSVVI), 246-266 (ILTVITTLLANLALILFGGEA), and 272-292 (ILVFFGIIVGTYSSIFISAPI).

Belongs to the SecD/SecF family. SecF subfamily. In terms of assembly, forms a complex with SecD. Part of the essential Sec protein translocation apparatus which comprises SecA, SecYEG and auxiliary proteins SecDF-YajC and YidC.

The protein resides in the cell inner membrane. Part of the Sec protein translocase complex. Interacts with the SecYEG preprotein conducting channel. SecDF uses the proton motive force (PMF) to complete protein translocation after the ATP-dependent function of SecA. The protein is Protein translocase subunit SecF of Rickettsia rickettsii (strain Sheila Smith).